The following is a 192-amino-acid chain: Thymidine kinase (192 aa).

Residues 9–16 (GAMNSGKT) and 85–88 (DEAQ) each bind ATP. The active-site Proton acceptor is the glutamate 86. Residues cysteine 143, cysteine 146, cysteine 180, and histidine 183 each contribute to the Zn(2+) site.

Belongs to the thymidine kinase family. In terms of assembly, homotetramer.

The protein resides in the cytoplasm. It carries out the reaction thymidine + ATP = dTMP + ADP + H(+). The polypeptide is Thymidine kinase (Lactiplantibacillus plantarum (strain ATCC BAA-793 / NCIMB 8826 / WCFS1) (Lactobacillus plantarum)).